The chain runs to 303 residues: Methyltransferase ktnA (303 aa).

The protein belongs to the class I-like SAM-binding methyltransferase superfamily. S-adenosyl-L-methionine is required as a cofactor.

Non-reducing polyketide synthase; part of the gene cluster that mediates the biosynthesis of the bicoumarin kotanin. The non-reducing polyketide synthase ktnS first catalyzes the formation of the pentaketidic 4,7-dihydroxy-5-methylcoumarin from acetyl coenzyme A and 4 malonyl coenzyme A molecules. Further O-methylation by ktnB leads to the formation of 7-demethylsiderin. Then, an oxidative phenol coupling catalyzed by the cytochrome P450 monooxygenase ktnC forms the 8,8'-dimer P-orlandin via dimerization the monomeric precursor, 7-demethylsiderin. P-orlandin is subsequently O-methylated in a stepwise fashion to demethylkotanin and kotanin. The function of ktnA within the pathway has not been determined yet. In Aspergillus niger (strain ATCC MYA-4892 / CBS 513.88 / FGSC A1513), this protein is Methyltransferase ktnA.